The following is an 819-amino-acid chain: Leucine--tRNA ligase (819 aa).

The short motif at 41–51 (PYPSGTLHVGH) is the 'HIGH' region element. The 'KMSKS' region signature appears at 578–582 (KMSKS). ATP is bound at residue K581.

This sequence belongs to the class-I aminoacyl-tRNA synthetase family.

It is found in the cytoplasm. It carries out the reaction tRNA(Leu) + L-leucine + ATP = L-leucyl-tRNA(Leu) + AMP + diphosphate. This chain is Leucine--tRNA ligase, found in Fervidobacterium nodosum (strain ATCC 35602 / DSM 5306 / Rt17-B1).